The following is a 144-amino-acid chain: Large ribosomal subunit protein uL15 (144 aa).

Positions 1 to 54 (MKLNTIKPAEGAKHARRRVGRGIGSGLGKTGGRGHKGQKSRAGGFHKVGFEGGQ) are disordered. Positions 21–31 (RGIGSGLGKTG) are enriched in gly residues.

It belongs to the universal ribosomal protein uL15 family. In terms of assembly, part of the 50S ribosomal subunit.

Functionally, binds to the 23S rRNA. The sequence is that of Large ribosomal subunit protein uL15 from Methylobacillus flagellatus (strain ATCC 51484 / DSM 6875 / VKM B-1610 / KT).